A 174-amino-acid polypeptide reads, in one-letter code: Photosystem I assembly protein Ycf4 (174 aa).

The next 2 helical transmembrane spans lie at 11–31 and 56–76; these read LSNI…FLNG and IILM…CLTI.

It belongs to the Ycf4 family.

Its subcellular location is the plastid. It is found in the chloroplast thylakoid membrane. Seems to be required for the assembly of the photosystem I complex. The protein is Photosystem I assembly protein Ycf4 of Emiliania huxleyi (Coccolithophore).